Consider the following 417-residue polypeptide: NADH-quinone oxidoreductase subunit D (417 aa).

The protein belongs to the complex I 49 kDa subunit family. As to quaternary structure, NDH-1 is composed of 14 different subunits. Subunits NuoB, C, D, E, F, and G constitute the peripheral sector of the complex.

Its subcellular location is the cell inner membrane. The enzyme catalyses a quinone + NADH + 5 H(+)(in) = a quinol + NAD(+) + 4 H(+)(out). In terms of biological role, NDH-1 shuttles electrons from NADH, via FMN and iron-sulfur (Fe-S) centers, to quinones in the respiratory chain. The immediate electron acceptor for the enzyme in this species is believed to be ubiquinone. Couples the redox reaction to proton translocation (for every two electrons transferred, four hydrogen ions are translocated across the cytoplasmic membrane), and thus conserves the redox energy in a proton gradient. The chain is NADH-quinone oxidoreductase subunit D from Paraburkholderia xenovorans (strain LB400).